The chain runs to 430 residues: Serine--tRNA ligase (430 aa).

231 to 233 contributes to the L-serine binding site; the sequence is TSE. An ATP-binding site is contributed by 262-264; it reads RSE. Glutamate 285 is a binding site for L-serine. 349–352 contributes to the ATP binding site; it reads EISS. An L-serine-binding site is contributed by serine 385.

Belongs to the class-II aminoacyl-tRNA synthetase family. Type-1 seryl-tRNA synthetase subfamily. As to quaternary structure, homodimer. The tRNA molecule binds across the dimer.

The protein resides in the cytoplasm. It carries out the reaction tRNA(Ser) + L-serine + ATP = L-seryl-tRNA(Ser) + AMP + diphosphate + H(+). The catalysed reaction is tRNA(Sec) + L-serine + ATP = L-seryl-tRNA(Sec) + AMP + diphosphate + H(+). Its pathway is aminoacyl-tRNA biosynthesis; selenocysteinyl-tRNA(Sec) biosynthesis; L-seryl-tRNA(Sec) from L-serine and tRNA(Sec): step 1/1. Catalyzes the attachment of serine to tRNA(Ser). Is also able to aminoacylate tRNA(Sec) with serine, to form the misacylated tRNA L-seryl-tRNA(Sec), which will be further converted into selenocysteinyl-tRNA(Sec). The protein is Serine--tRNA ligase of Roseobacter denitrificans (strain ATCC 33942 / OCh 114) (Erythrobacter sp. (strain OCh 114)).